The following is a 101-amino-acid chain: MAKKSMINRELKREKMVAKYADKRIKLKETISDMTASDETRMEAMLELQALPRNASPVRLRNRCAITGRPHGYFRKFGLSRNMLRERVMQGDVPGVRKASW.

It belongs to the universal ribosomal protein uS14 family. Part of the 30S ribosomal subunit. Contacts proteins S3 and S10.

In terms of biological role, binds 16S rRNA, required for the assembly of 30S particles and may also be responsible for determining the conformation of the 16S rRNA at the A site. This is Small ribosomal subunit protein uS14 from Psychrobacter arcticus (strain DSM 17307 / VKM B-2377 / 273-4).